Here is a 378-residue protein sequence, read N- to C-terminus: Cln5-like protein 1 (378 aa).

Residues 1-20 (MNKIIIFILFLISILQSVRG) form the signal peptide. N-linked (GlcNAc...) asparagine glycans are attached at residues asparagine 63, asparagine 93, asparagine 135, asparagine 181, asparagine 220, asparagine 226, asparagine 254, and asparagine 280. Residues 308-328 (WIFIIILLSFTTVYLVGGILI) form a helical membrane-spanning segment.

This sequence belongs to the CLN5 family.

It is found in the membrane. The chain is Cln5-like protein 1 (cln5la) from Dictyostelium discoideum (Social amoeba).